Here is a 416-residue protein sequence, read N- to C-terminus: Putative F-box/kelch-repeat protein At1g12870 (416 aa).

Residues 27-76 (MIASSSLPDDVVEEIFLKLPVKALMRFKSLSKQWRSTLESCYFSQRHLKI) form the F-box domain. Kelch repeat units lie at residues 199 to 243 (LVWL…PASA) and 297 to 341 (CMYE…HVLD).

In Arabidopsis thaliana (Mouse-ear cress), this protein is Putative F-box/kelch-repeat protein At1g12870.